The chain runs to 87 residues: MKTLLLSLVVVTIVCLDLGYTRTCLISPSSTPQTCPNGQDICFRKAQCDNFCHSRGPVIEQGCVATCPQFRSNYRSLLCCRTDNCNH.

The signal sequence occupies residues 1–21 (MKTLLLSLVVVTIVCLDLGYT). 5 disulfide bridges follow: Cys24-Cys42, Cys35-Cys63, Cys48-Cys52, Cys67-Cys79, and Cys80-Cys85.

The protein belongs to the three-finger toxin family. Long-chain subfamily. Kappa-neurotoxin sub-subfamily. Homodimer and heterodimer with kappa 2-bungarotoxin; non-covalently-linked. In terms of tissue distribution, expressed by the venom gland.

The protein localises to the secreted. Postsynaptic neurotoxin that binds and inhibits neuronal nicotinic acetylcholine receptors (nAChR) with high affinity (IC(50)&lt;100 nM). Is a selective, and slowly reversible antagonist of alpha-3/CHRNA3-containing and some alpha-4/CHRNA4-containing AChRs. This chain is Kappa-3-bungarotoxin, found in Bungarus multicinctus (Many-banded krait).